We begin with the raw amino-acid sequence, 133 residues long: NAD(P)H-quinone oxidoreductase subunit 3 (133 aa).

3 helical membrane passes run 22–44 (YLLGFLLISSLVPILSLTASRLL), 77–97 (MFALVFVIFDVETVFLYPWAV), and 102–122 (LGLLAFVEALIFITILVVGLA).

Belongs to the complex I subunit 3 family. NDH-1 can be composed of about 15 different subunits; different subcomplexes with different compositions have been identified which probably have different functions.

The protein localises to the cellular thylakoid membrane. The catalysed reaction is a plastoquinone + NADH + (n+1) H(+)(in) = a plastoquinol + NAD(+) + n H(+)(out). It carries out the reaction a plastoquinone + NADPH + (n+1) H(+)(in) = a plastoquinol + NADP(+) + n H(+)(out). NDH-1 shuttles electrons from an unknown electron donor, via FMN and iron-sulfur (Fe-S) centers, to quinones in the respiratory and/or the photosynthetic chain. The immediate electron acceptor for the enzyme in this species is believed to be plastoquinone. Couples the redox reaction to proton translocation, and thus conserves the redox energy in a proton gradient. Cyanobacterial NDH-1 also plays a role in inorganic carbon-concentration. In Synechococcus sp. (strain ATCC 27144 / PCC 6301 / SAUG 1402/1) (Anacystis nidulans), this protein is NAD(P)H-quinone oxidoreductase subunit 3.